Here is a 205-residue protein sequence, read N- to C-terminus: CASP-like protein 0U1 (205 aa).

Residues 1–66 (MSGGDIDPTA…GYHKFAVFQF (66 aa)) are Cytoplasmic-facing. An MARVEL domain is found at 10 to 162 (AINSPKFRLI…SMMFTWKEWR (153 aa)). The helical transmembrane segment at 67 to 87 (LVVICVTYWLFTMLWMGMYLI) threads the bilayer. At 88 to 90 (QKV) the chain is on the extracellular side. A helical transmembrane segment spans residues 91-111 (PPAGTEFMIYAVFNVLILIAF). The Cytoplasmic portion of the chain corresponds to 112 to 137 (STSWTECNETIVDPTYPVCKRATGAK). Residues 138–158 (ASIAFAMFTWLALCVSMMFTW) form a helical membrane-spanning segment. Over 159 to 167 (KEWRDQNYE) the chain is Extracellular. Residues 168–188 (GLPIFGDFSSFMPGGGGGGMG) form a helical membrane-spanning segment. At 189–205 (GGGGYERPSDVNTQTYA) the chain is on the cytoplasmic side.

This sequence belongs to the Casparian strip membrane proteins (CASP) family. As to quaternary structure, homodimer and heterodimers.

The protein resides in the cell membrane. This is CASP-like protein 0U1 from Micromonas pusilla (strain CCMP1545) (Picoplanktonic green alga).